Consider the following 226-residue polypeptide: 8-oxoguanine DNA glycosylase/AP lyase (226 aa).

Active-site residues include Lys-149 and Asp-167.

The protein belongs to the type-2 OGG1 family.

It carries out the reaction 2'-deoxyribonucleotide-(2'-deoxyribose 5'-phosphate)-2'-deoxyribonucleotide-DNA = a 3'-end 2'-deoxyribonucleotide-(2,3-dehydro-2,3-deoxyribose 5'-phosphate)-DNA + a 5'-end 5'-phospho-2'-deoxyribonucleoside-DNA + H(+). In terms of biological role, catalyzes the excision of an oxidatively damaged form of guanine (7,8-dihydro-8-oxoguanine = 8-oxoG) from DNA. Also cleaves the DNA backbone at apurinic/apyrimidinic sites (AP sites). This chain is 8-oxoguanine DNA glycosylase/AP lyase, found in Aquifex aeolicus (strain VF5).